A 101-amino-acid polypeptide reads, in one-letter code: Small ribosomal subunit protein uS14 (101 aa).

It belongs to the universal ribosomal protein uS14 family. In terms of assembly, part of the 30S ribosomal subunit. Contacts proteins S3 and S10.

Its function is as follows. Binds 16S rRNA, required for the assembly of 30S particles and may also be responsible for determining the conformation of the 16S rRNA at the A site. This chain is Small ribosomal subunit protein uS14, found in Maricaulis maris (strain MCS10) (Caulobacter maris).